The sequence spans 108 residues: MAGKTVTRADLSEAVYQQVGLSRAESAALVETVLGEICNCLSSGETVKLSSFGSFVVRSKGKRIGRNPKTGVEVEIEPRQVMVFKPSNVLKARINGGHVNGLDADEDE.

It belongs to the bacterial histone-like protein family. In terms of assembly, heterodimer of an alpha and a beta chain.

In terms of biological role, this protein is one of the two subunits of integration host factor, a specific DNA-binding protein that functions in genetic recombination as well as in transcriptional and translational control. The sequence is that of Integration host factor subunit alpha from Methylorubrum populi (strain ATCC BAA-705 / NCIMB 13946 / BJ001) (Methylobacterium populi).